A 98-amino-acid polypeptide reads, in one-letter code: Putative pterin-4-alpha-carbinolamine dehydratase (98 aa).

The protein belongs to the pterin-4-alpha-carbinolamine dehydratase family.

It catalyses the reaction (4aS,6R)-4a-hydroxy-L-erythro-5,6,7,8-tetrahydrobiopterin = (6R)-L-erythro-6,7-dihydrobiopterin + H2O. This Chelativorans sp. (strain BNC1) protein is Putative pterin-4-alpha-carbinolamine dehydratase.